The primary structure comprises 568 residues: MGSLGMYSESGLTKKGSSRGYDVPEGVDIRGRYDEEFAKILNKEALLFIADLQRTFRNHIKYSMECRREAKRRYNEGGLPGFDPATKYIRDSEWTCAPVPPAVADRRVEITGPVERKMIINALNSGAKVFMADFEDALSPNWENLMRGQINLKDAVDGTISFHDRVRNRVYKLNDRTAKLFVRPRGWHLPEAHIFIDGEPATGCLVDFGLYFFHNHANFRRSQGQGYGPFFYLPKMEHSREAKIWNSVFERAEKMAGIERGSIRATVLIETLPAVFQMNEILYELRDHSVGLNCGRWDYIFSYVKTFQAHPDRLLPDRVLVGMTQHFMRSYSDLLIRTCHRRGVHAMGGMAAQIPIRDDPKANEVALELVRKDKLREVKAGHDGTWAAHPGLIPACMEVFTNNMGNAPNQIRSMRRDDAANLTEEDLLQQPRGVRTMEGLRLNTRVGIQYLAAWLTGAGSVPLYNLAEDAATAEISRVQNWQWLKYGVELDGDGLGVRVNKELFGRVVEEEMERIEREVGKERFKKGMYKEACKMFTRQCTAPNLDDFLTLDAYNYIVIHHPRELSKL.

Residues Met-1–Gly-20 are disordered. Arg-183 functions as the Proton acceptor in the catalytic mechanism. Asp-469 functions as the Proton donor in the catalytic mechanism. A Microbody targeting signal motif is present at residues Ser-566–Leu-568.

It belongs to the malate synthase family.

The protein localises to the glyoxysome. It catalyses the reaction glyoxylate + acetyl-CoA + H2O = (S)-malate + CoA + H(+). It functions in the pathway carbohydrate metabolism; glyoxylate cycle; (S)-malate from isocitrate: step 2/2. In Cucumis sativus (Cucumber), this protein is Malate synthase, glyoxysomal.